The following is a 99-amino-acid chain: Cell division protein FtsB (99 aa).

Residues 1–3 are Cytoplasmic-facing; sequence MKF. The chain crosses the membrane as a helical span at residues 4–21; that stretch reads FVIALIVLLGLLQYRLWS. Topologically, residues 22-99 are periplasmic; sequence GDNSLPEYFV…GDRSVSSPSQ (78 aa). A coiled-coil region spans residues 31–73; that stretch reads VLQKQIAAQQDGNAKLNERNQVLKEEIIDLKSGTEAIEERARN.

Belongs to the FtsB family. Part of a complex composed of FtsB, FtsL and FtsQ.

The protein resides in the cell inner membrane. Functionally, essential cell division protein. May link together the upstream cell division proteins, which are predominantly cytoplasmic, with the downstream cell division proteins, which are predominantly periplasmic. The chain is Cell division protein FtsB from Shewanella sp. (strain MR-4).